Reading from the N-terminus, the 688-residue chain is DNA-directed RNA polymerase subunit beta' (688 aa).

Zn(2+) contacts are provided by C69, C71, C87, and C90. The Mg(2+) site is built by D497, D499, and D501.

Belongs to the RNA polymerase beta' chain family. RpoC1 subfamily. As to quaternary structure, in plastids the minimal PEP RNA polymerase catalytic core is composed of four subunits: alpha, beta, beta', and beta''. When a (nuclear-encoded) sigma factor is associated with the core the holoenzyme is formed, which can initiate transcription. Mg(2+) is required as a cofactor. It depends on Zn(2+) as a cofactor.

Its subcellular location is the plastid. The protein localises to the chloroplast. The catalysed reaction is RNA(n) + a ribonucleoside 5'-triphosphate = RNA(n+1) + diphosphate. In terms of biological role, DNA-dependent RNA polymerase catalyzes the transcription of DNA into RNA using the four ribonucleoside triphosphates as substrates. The chain is DNA-directed RNA polymerase subunit beta' from Sinapis alba (White mustard).